Here is a 292-residue protein sequence, read N- to C-terminus: Chondroitin proteoglycan 3 (292 aa).

Residues 1-17 (MRFVFIIALLLIGASLA) form the signal peptide. The interval 28–103 (DVSASEDEFS…EGSGDTSPVV (76 aa)) is disordered. A compositionally biased stretch (low complexity) spans 38–80 (GDSSGEISGESSGEASGEASGEASGEASGEASGESSGETSGES). The segment covering 81–96 (SGDEETSGEGSGEEGS) has biased composition (acidic residues). Asn-174 and Asn-254 each carry an N-linked (GlcNAc...) asparagine glycan.

The sequence is that of Chondroitin proteoglycan 3 from Caenorhabditis elegans.